Here is a 343-residue protein sequence, read N- to C-terminus: 4-hydroxy-2-oxovalerate aldolase (343 aa).

Residues 4 to 254 (PRLTDTTLRD…NPGLDVFGLM (251 aa)) enclose the Pyruvate carboxyltransferase domain. 12–13 (RD) provides a ligand contact to substrate. Asp13 is a Mn(2+) binding site. The active-site Proton acceptor is His16. Substrate is bound by residues Ser166 and His193. The Mn(2+) site is built by His193 and His195. Tyr284 contacts substrate.

This sequence belongs to the 4-hydroxy-2-oxovalerate aldolase family.

It carries out the reaction (S)-4-hydroxy-2-oxopentanoate = acetaldehyde + pyruvate. This Chloroflexus aggregans (strain MD-66 / DSM 9485) protein is 4-hydroxy-2-oxovalerate aldolase.